The primary structure comprises 542 residues: Sensory neuron membrane protein 2 (542 aa).

At 1 to 487 the chain is on the extracellular side; the sequence is MMVMNTELRQ…MKVLTLLDIV (487 aa). 4 N-linked (GlcNAc...) asparagine glycosylation sites follow: asparagine 33, asparagine 128, asparagine 238, and asparagine 274. Disulfide bonds link cysteine 283-cysteine 351, cysteine 312-cysteine 378, and cysteine 353-cysteine 367. The chain crosses the membrane as a helical span at residues 488–508; that stretch reads QWVMIGSGLLLAIIMPIVYFI. Topologically, residues 509–542 are cytoplasmic; the sequence is KRRPSSGSITPTLTTTTSTVSISDGGGLGGNPQK.

The protein belongs to the CD36 family. Detected in the antenna, legs and wings. Higher levels of expression detected in male compared to female.

Its subcellular location is the cell membrane. Plays an olfactory role that is not restricted to pheromone sensitivity. This chain is Sensory neuron membrane protein 2, found in Aedes aegypti (Yellowfever mosquito).